Consider the following 369-residue polypeptide: 3-isopropylmalate dehydrogenase (369 aa).

Substrate contacts are provided by R98, R108, R136, and D227. D227, D251, and D255 together coordinate Mg(2+). An NAD(+)-binding site is contributed by 290–302 (GSAPDIAGKGIAN).

The protein belongs to the isocitrate and isopropylmalate dehydrogenases family. LeuB type 1 subfamily. As to quaternary structure, homodimer. It depends on Mg(2+) as a cofactor. Mn(2+) is required as a cofactor.

It localises to the cytoplasm. The catalysed reaction is (2R,3S)-3-isopropylmalate + NAD(+) = 4-methyl-2-oxopentanoate + CO2 + NADH. It participates in amino-acid biosynthesis; L-leucine biosynthesis; L-leucine from 3-methyl-2-oxobutanoate: step 3/4. Catalyzes the oxidation of 3-carboxy-2-hydroxy-4-methylpentanoate (3-isopropylmalate) to 3-carboxy-4-methyl-2-oxopentanoate. The product decarboxylates to 4-methyl-2 oxopentanoate. This is 3-isopropylmalate dehydrogenase from Gluconobacter oxydans (strain 621H) (Gluconobacter suboxydans).